The following is a 208-amino-acid chain: Small ribosomal subunit protein uS3 (208 aa).

Residues 16-85 (IDEYFKKELS…KPQIDVKPVE (70 aa)) form the KH type-2 domain.

This sequence belongs to the universal ribosomal protein uS3 family. Part of the 30S ribosomal subunit.

Binds the lower part of the 30S subunit head. This chain is Small ribosomal subunit protein uS3, found in Methanocaldococcus jannaschii (strain ATCC 43067 / DSM 2661 / JAL-1 / JCM 10045 / NBRC 100440) (Methanococcus jannaschii).